The following is a 379-amino-acid chain: Tetraacyldisaccharide 4'-kinase (379 aa).

Alanine 63–threonine 70 contributes to the ATP binding site.

Belongs to the LpxK family.

The enzyme catalyses a lipid A disaccharide + ATP = a lipid IVA + ADP + H(+). It participates in glycolipid biosynthesis; lipid IV(A) biosynthesis; lipid IV(A) from (3R)-3-hydroxytetradecanoyl-[acyl-carrier-protein] and UDP-N-acetyl-alpha-D-glucosamine: step 6/6. In terms of biological role, transfers the gamma-phosphate of ATP to the 4'-position of a tetraacyldisaccharide 1-phosphate intermediate (termed DS-1-P) to form tetraacyldisaccharide 1,4'-bis-phosphate (lipid IVA). In Anaeromyxobacter dehalogenans (strain 2CP-1 / ATCC BAA-258), this protein is Tetraacyldisaccharide 4'-kinase.